A 241-amino-acid chain; its full sequence is Uracil-DNA glycosylase (241 aa).

Residue aspartate 73 is the Proton acceptor of the active site.

This sequence belongs to the uracil-DNA glycosylase (UDG) superfamily. UNG family.

Its subcellular location is the cytoplasm. It catalyses the reaction Hydrolyzes single-stranded DNA or mismatched double-stranded DNA and polynucleotides, releasing free uracil.. In terms of biological role, excises uracil residues from the DNA which can arise as a result of misincorporation of dUMP residues by DNA polymerase or due to deamination of cytosine. This Agrobacterium fabrum (strain C58 / ATCC 33970) (Agrobacterium tumefaciens (strain C58)) protein is Uracil-DNA glycosylase.